The following is a 398-amino-acid chain: Carboxyaminopropylagmatine dehydrogenase (398 aa).

This sequence belongs to the saccharopine dehydrogenase family.

The catalysed reaction is N(1)-[(S)-3-amino-3-carboxypropyl]agmatine + NADP(+) + H2O = L-aspartate 4-semialdehyde + agmatine + NADPH + H(+). The protein operates within amine and polyamine biosynthesis; spermidine biosynthesis. Its function is as follows. Dehydrogenase involved in the biosynthesis of spermidine via the carboxyaminopropylagmatine (CAPA) pathway. Catalyzes the reductive condensation of agmatine and L-aspartate-beta-semialdehyde (ASA) into CAPA. Shows activity toward putrescine and 1,3-diaminopropane, but the catalytic efficiency is three to four orders of magnitude lower than that for agmatine. Cannot use cadaverine or spermidine. This Synechocystis sp. (strain ATCC 27184 / PCC 6803 / Kazusa) protein is Carboxyaminopropylagmatine dehydrogenase.